Reading from the N-terminus, the 296-residue chain is Class E basic helix-loop-helix protein 22 (296 aa).

The disordered stretch occupies residues 26–70; sequence SAFRPPQGLDLSQPGDRSPLHCYDGPDPSDLLRHHQHHHQASSGA. The region spanning 153-207 is the bHLH domain; it reads TLRLNINARERRRMHDLNDALDELRAVIPYAHSPSVRKLSKIATLLLAKNYILMQ.

It localises to the nucleus. May act as a transcriptional repressor. The protein is Class E basic helix-loop-helix protein 22 (bhlhe22) of Xenopus tropicalis (Western clawed frog).